A 456-amino-acid polypeptide reads, in one-letter code: 3-isopropylmalate dehydratase large subunit (456 aa).

[4Fe-4S] cluster contacts are provided by cysteine 336, cysteine 396, and cysteine 399.

The protein belongs to the aconitase/IPM isomerase family. LeuC type 1 subfamily. Heterodimer of LeuC and LeuD. [4Fe-4S] cluster serves as cofactor.

It carries out the reaction (2R,3S)-3-isopropylmalate = (2S)-2-isopropylmalate. Its pathway is amino-acid biosynthesis; L-leucine biosynthesis; L-leucine from 3-methyl-2-oxobutanoate: step 2/4. Functionally, catalyzes the isomerization between 2-isopropylmalate and 3-isopropylmalate, via the formation of 2-isopropylmaleate. The protein is 3-isopropylmalate dehydratase large subunit of Staphylococcus epidermidis (strain ATCC 12228 / FDA PCI 1200).